We begin with the raw amino-acid sequence, 38 residues long: Potassium channel toxin alpha-KTx 2.15 (38 aa).

3 cysteine pairs are disulfide-bonded: C7-C29, C13-C34, and C17-C36.

This sequence belongs to the short scorpion toxin superfamily. Potassium channel inhibitor family. Alpha-KTx 02 subfamily. In terms of tissue distribution, expressed by the venom gland.

It is found in the secreted. Functionally, blocks human voltage-gated potassium channels Kv1.2/KCNA2 (IC(50)=0.3 nM), Kv1.3/KCNA3 (IC(50)=8.3 nM) and Shaker IR (with inactivation domain removed) (IC(50)=12 nM) and blocks intermediate conductance calcium-activated potassium channel KCa3.1/KCNN4 (IC(50)=6.4 nM). This chain is Potassium channel toxin alpha-KTx 2.15, found in Centruroides tecomanus (Scorpion).